Reading from the N-terminus, the 433-residue chain is Xylose isomerase (433 aa).

Active-site residues include histidine 99 and aspartate 102. Residues glutamate 230, glutamate 266, histidine 269, aspartate 294, aspartate 305, aspartate 307, and aspartate 337 each contribute to the Mg(2+) site.

The protein belongs to the xylose isomerase family. As to quaternary structure, homotetramer. Requires Mg(2+) as cofactor.

It localises to the cytoplasm. It catalyses the reaction alpha-D-xylose = alpha-D-xylulofuranose. The protein is Xylose isomerase of Cereibacter sphaeroides (strain ATCC 17025 / ATH 2.4.3) (Rhodobacter sphaeroides).